Here is a 194-residue protein sequence, read N- to C-terminus: MSPRSKSQLRTALLQNRRSVPEAVREGEAEALRGWLSGLKISGRTVCAYVPVGSEPGSIALLDTLLELGARVLLPVARNDAAGIPLPLQWGKYRPGTLVAAEFGLREPPPPWLPAETIGEADVILVPALAVDRSGARLGRGAGFYDRTLHHAAATAQVIAVVRDDELLDEIPAEPHDVAMTHVLTPKRGIVALR.

ATP-binding positions include Lys-6 to Arg-10, Gly-139 to Asp-146, and Asp-177.

It belongs to the 5-formyltetrahydrofolate cyclo-ligase family.

The enzyme catalyses (6S)-5-formyl-5,6,7,8-tetrahydrofolate + ATP = (6R)-5,10-methenyltetrahydrofolate + ADP + phosphate. Its pathway is one-carbon metabolism; tetrahydrofolate interconversion. In terms of biological role, involved in the removal of 5-formyltetrahydrofolate. In vitro, it is a potent inhibitor of various folate-dependent enzymes in the C1 metabolism network and in vivo it might function as a folate storage. 5-formyltetrahydrofolate is also used as an antifolate rescue agent in cancer chemotherapy. Catalyzes the irreversible ATP-dependent transformation of 5-formyltetrahydrofolate (5-CHO-THF) to form 5,10-methenyltetrahydrofolate (5,10-CH=THF). The reverse reaction is catalyzed by the serine hydroxymethyltransferase GlyA (SHMT). The polypeptide is 5-formyltetrahydrofolate cyclo-ligase (Mycolicibacterium smegmatis (strain ATCC 700084 / mc(2)155) (Mycobacterium smegmatis)).